Consider the following 403-residue polypeptide: Phosphopentomutase (403 aa).

Residues Asp13, Asp298, His303, Asp339, His340, and His351 each contribute to the Mn(2+) site.

The protein belongs to the phosphopentomutase family. Mn(2+) is required as a cofactor.

The protein localises to the cytoplasm. The catalysed reaction is 2-deoxy-alpha-D-ribose 1-phosphate = 2-deoxy-D-ribose 5-phosphate. It catalyses the reaction alpha-D-ribose 1-phosphate = D-ribose 5-phosphate. Its pathway is carbohydrate degradation; 2-deoxy-D-ribose 1-phosphate degradation; D-glyceraldehyde 3-phosphate and acetaldehyde from 2-deoxy-alpha-D-ribose 1-phosphate: step 1/2. Functionally, isomerase that catalyzes the conversion of deoxy-ribose 1-phosphate (dRib-1-P) and ribose 1-phosphate (Rib-1-P) to deoxy-ribose 5-phosphate (dRib-5-P) and ribose 5-phosphate (Rib-5-P), respectively. The protein is Phosphopentomutase of Streptococcus pyogenes serotype M3 (strain ATCC BAA-595 / MGAS315).